A 1914-amino-acid polypeptide reads, in one-letter code: MSRWLWPWSNCVKERVCRYLLQHYLGHFFQEHLSLDQLSLDLYKGSVALRDIHLETWSVNEFLRSMESPLELVEGFVSSIEVAVPWAALLTDHCTVCVSGLQLTLQPRQGSGPGAADSQSWASCMTTSLQLAQECLREGLPEPSEPPQPLEGLEMFAQTIETVLRRIKVTFLNTVVRVEHSLGDEDRSVAVEVRVQRLEYCDEAVRDPSQAPPVDVHQPPAFLHKLLQLSGVCLYFEELPSQADPPQPPLQIGSCTGYVELMVRLKQNEAFPGPKLEVSGQLGSLHLLLTPRQLQQLQRLLSAVNLADPAGLADKLNKSRPLGAEDLWLIEQDLNQQLQAGAVAESLSLYPITNPLNLDSTDLFFSMAGLTSSVTSAVSELSVYSVDLGSSVHSNMAFHRPSTPPHSGGKMAPTPLLDTTRPDSLVKMTLGGVSLTLLQTASPSSGPSDLPTHFFAEFDAAKDGPFGSRDFSHLRPRFQRACPCSHVRLTGTAVQLSWELRTGSHSRRTSSTEVHFGQLEVLECLWPRAATEPEYTEILSFPSHSGSEASARPCAHLRHTQTIRRVLKSRSRRSTACHCHSELSLDLADFQSDVELGSLDRLAALFRQVTTPSEPPAGLLTEPPQATELQTVFRLSAPRATLRLRFPIPDLRPDRDPWAGQAVRAEQLRLELSEPQFRSELNSGPGPPAPTRLELTCSDLQGIYEDGEKPPVPCLRVSKALNPRSTEAKYFLPQVVVTLNPQSSGTQWETAYEKGRDLELSTESPCELQQPEPSPFSSKRTMYETEEMVIPGDPEEMRTFQSRTLALSRCTLDVIMPSAHIFLPSKEVYESIYNRINNDLLMWEPADLLPTSSAAARPPGSSGFKMCKSAFKLDSDSDEEDAQFFSMASGVPQTPAPEPSRRQSQSTFSTLVTVLKGRITALCEAKDETGKRLDVTHGELVLDVEQGTIFSVAQYRGQPGLGYFCLEAEKAKLYHRAAIEDYLLPTHLEVPSFAPPAQLAPTIYPSEEGVTERGTLGRKGQGPPMLSAAVRIHLDPHKNVKEFLVTVRLHKATLRHYMAPPEQSWHSQLLDFLDVLDDPVLGYLPPTVITVLHTHLFSCAVDYRPLYLPVRVLVTAETFTLSSNIVMDTSTFLLRFILDDSALYLSDKCEVESLDLRRDYVCVLDIDLLELVIKTWKGSTEGRLSQPLFELRCSNNVVHVHSCADSCALLVNLLQYLTSSGDLHPPPRPPSPTEIAGQKLSESPASLPSCLPVETALINQRDLTDALLDTERRGLQELAQSSGGPLPQASPVSVYLFPGERSGAQAPLPPPGASSHTLGSKAKEHENEEEGDGDTLDSDEFCILDAPGLGIAPRDGEPIVTQLHPGPIIVHDGHFSQPLGSTDLLRAPAHFPVPSSRVVLREVSFIWHLYGGRDFGLHPTYRARVGLTGPRVSPSRSSGPNRPQNSWRTQGGIGRQHQVLMEIQLSKVSFQHEVYPEESAIAGGLGQELDERPLSRQVLIVQELEIRDRLATSKINKFLHLHTSERLPRRTHSNMLTIKALHVAPTSSVGGPECCLRVSMMPLRLNVDQDALFFLKDFFTSLAASINPMVPGDTSEAPRETHSRPGSPQEGQSEDTETASNPPEAPGSSHSSSDQQPIYFREFRFTSEVPICLDYHGKHVTVDQVGTFMGLLIGLAQLNCSELKLKRLCCRHGLLGVDKVLCYALNEWLQDIRKNQLPGLLGGVGPMHSVVQLFQGFRDLLWLPIEQYRKDGRLIRGLQRGAASFGSSTASAALELSNRLVQAIQATAETVYDILSPASPVSRSLQDKRSSRKLRRGQQPADLREGMAKAYDAVREGILDTAQTICDVASRGHEQKGLTGAVGGVIRQLPPTVVKPIIVATEATSNVLGGMRNQILPDAHKDHALKWRLEEAQD.

Positions 14–112 constitute a Chorein N-terminal domain; it reads ERVCRYLLQH…LTLQPRQGSG (99 aa). Phosphoserine occurs at positions 764, 869, 875, and 877. The interval 1222–1243 is disordered; it reads DLHPPPRPPSPTEIAGQKLSES. Residues Ser1246, Ser1282, and Ser1290 each carry the phosphoserine modification. Residues 1299–1337 are disordered; it reads GERSGAQAPLPPPGASSHTLGSKAKEHENEEEGDGDTLD. The span at 1327–1337 shows a compositional bias: acidic residues; the sequence is NEEEGDGDTLD. Residues 1337–1383 form a WIPI-interacting region; that stretch reads DSDEFCILDAPGLGIAPRDGEPIVTQLHPGPIIVHDGHFSQPLGSTD. Ser1381 carries the phosphoserine modification. Disordered stretches follow at residues 1427-1452, 1589-1634, and 1803-1822; these read LTGP…TQGG, MVPG…SSSD, and RSLQ…QPAD. Residues 1429–1446 are compositionally biased toward low complexity; that stretch reads GPRVSPSRSSGPNRPQNS.

This sequence belongs to the ATG2 family. Interacts with ATG9A (via C-terminus). Interacts with TMEM41B. Interacts with VMP1.

Its subcellular location is the preautophagosomal structure membrane. It localises to the lipid droplet. The protein localises to the endoplasmic reticulum membrane. The catalysed reaction is a 1,2-diacyl-sn-glycero-3-phospho-L-serine(in) = a 1,2-diacyl-sn-glycero-3-phospho-L-serine(out). The enzyme catalyses a 1,2-diacyl-sn-glycero-3-phosphoethanolamine(in) = a 1,2-diacyl-sn-glycero-3-phosphoethanolamine(out). In terms of biological role, lipid transfer protein involved in autophagosome assembly. Tethers the edge of the isolation membrane (IM) to the endoplasmic reticulum (ER) and mediates direct lipid transfer from ER to IM for IM expansion. Binds to the ER exit site (ERES), which is the membrane source for autophagosome formation, and extracts phospholipids from the membrane source and transfers them to ATG9 (ATG9A or ATG9B) to the IM for membrane expansion. Lipid transfer activity is enhanced by WIPI1 and WDR45/WIPI4, which promote ATG2A-association with phosphatidylinositol 3-monophosphate (PI3P)-containing membranes. Also regulates lipid droplets morphology and distribution within the cell. Functionally, (Microbial infection) Mediates the intracellular lifestyle of Cryptococcus neoformans by supporting infection. The polypeptide is Autophagy-related protein 2 homolog A (Mus musculus (Mouse)).